A 132-amino-acid polypeptide reads, in one-letter code: Small ribosomal subunit protein uS8 (132 aa).

Belongs to the universal ribosomal protein uS8 family. In terms of assembly, part of the 30S ribosomal subunit. Contacts proteins S5 and S12.

Its function is as follows. One of the primary rRNA binding proteins, it binds directly to 16S rRNA central domain where it helps coordinate assembly of the platform of the 30S subunit. The polypeptide is Small ribosomal subunit protein uS8 (Rhizobium johnstonii (strain DSM 114642 / LMG 32736 / 3841) (Rhizobium leguminosarum bv. viciae)).